The chain runs to 201 residues: Glycerol-3-phosphate acyltransferase (201 aa).

5 helical membrane passes run 4 to 24 (LVAA…LVLT), 55 to 75 (LATL…VWVL), 80 to 100 (MVPV…WLGF), 110 to 130 (IGTL…TWLV), and 152 to 174 (FALY…MGFY).

It belongs to the PlsY family. Probably interacts with PlsX.

The protein resides in the cell inner membrane. The enzyme catalyses an acyl phosphate + sn-glycerol 3-phosphate = a 1-acyl-sn-glycero-3-phosphate + phosphate. It functions in the pathway lipid metabolism; phospholipid metabolism. Functionally, catalyzes the transfer of an acyl group from acyl-phosphate (acyl-PO(4)) to glycerol-3-phosphate (G3P) to form lysophosphatidic acid (LPA). This enzyme utilizes acyl-phosphate as fatty acyl donor, but not acyl-CoA or acyl-ACP. The sequence is that of Glycerol-3-phosphate acyltransferase from Paramagnetospirillum magneticum (strain ATCC 700264 / AMB-1) (Magnetospirillum magneticum).